Reading from the N-terminus, the 506-residue chain is Probable alpha-L-arabinofuranosidase B (506 aa).

Residues 1–26 form the signal peptide; sequence MLPQLSIERASVFALGLIATGSLVVA. The segment at 27-343 is catalytic; sequence GPCDIYSAGG…ANIVAAKYAT (317 aa). 3 cysteine pairs are disulfide-bonded: C29-C39, C89-C94, and C184-C185. Position 227 (D227) interacts with substrate. The active-site Nucleophile is the E229. A substrate-binding site is contributed by N230. N-linked (GlcNAc...) asparagine glycosylation is present at N240. Residue G304 participates in substrate binding. D305 serves as the catalytic Proton donor. An ABD region spans residues 344 to 506; sequence ASLTSGPKLT…VSWVISTGFA (163 aa). An intrachain disulfide couples C409 to C447. 7 residues coordinate substrate: H424, N426, F427, D443, H471, L476, and D496.

Belongs to the glycosyl hydrolase 54 family.

It localises to the secreted. It carries out the reaction Hydrolysis of terminal non-reducing alpha-L-arabinofuranoside residues in alpha-L-arabinosides.. It functions in the pathway glycan metabolism; L-arabinan degradation. In terms of biological role, alpha-L-arabinofuranosidase involved in the degradation of arabinoxylan, a major component of plant hemicellulose. Able to hydrolyze 1,5-, 1,3- and 1,2-alpha-linkages not only in L-arabinofuranosyl oligosaccharides, but also in polysaccharides containing terminal non-reducing L-arabinofuranoses in side chains, like L-arabinan, arabinogalactan and arabinoxylan. This is Probable alpha-L-arabinofuranosidase B (abfB) from Aspergillus fumigatus (strain ATCC MYA-4609 / CBS 101355 / FGSC A1100 / Af293) (Neosartorya fumigata).